A 539-amino-acid polypeptide reads, in one-letter code: Eukaryotic translation initiation factor 3 subunit L (539 aa).

Residues 306-514 (TFSDILLYVQ…IHIADTKVSH (209 aa)) form the PCI domain.

The protein belongs to the eIF-3 subunit L family. Component of the eukaryotic translation initiation factor 3 (eIF-3) complex. The eIF-3 complex interacts with pix.

It localises to the cytoplasm. Component of the eukaryotic translation initiation factor 3 (eIF-3) complex, which is involved in protein synthesis of a specialized repertoire of mRNAs and, together with other initiation factors, stimulates binding of mRNA and methionyl-tRNAi to the 40S ribosome. The eIF-3 complex specifically targets and initiates translation of a subset of mRNAs involved in cell proliferation. The protein is Eukaryotic translation initiation factor 3 subunit L of Drosophila willistoni (Fruit fly).